The sequence spans 317 residues: Zinc finger protein 771 (317 aa).

Lys33 participates in a covalent cross-link: Glycyl lysine isopeptide (Lys-Gly) (interchain with G-Cter in SUMO2). 8 consecutive C2H2-type zinc fingers follow at residues 63 to 85 (HACP…ARTH), 91 to 113 (FACT…GRTH), 119 to 141 (YQCP…RRRH), 147 to 169 (YACA…LRVH), 175 to 197 (YACP…RRTH), 203 to 225 (YACA…RRVH), 231 to 253 (HRCA…ARTH), and 259 to 281 (YPCT…RRAH).

The protein belongs to the krueppel C2H2-type zinc-finger protein family.

It localises to the nucleus. In terms of biological role, may be involved in transcriptional regulation. This chain is Zinc finger protein 771 (Znf771), found in Mus musculus (Mouse).